The following is a 383-amino-acid chain: Ceramide synthase 3 (383 aa).

Residues 32–52 (VFVKASHLYITIPYAFLLMVV) traverse the membrane as a helical segment. The segment at 66-127 (NALGIKKTQH…RIRQKQNKPC (62 aa)) is homeobox-like. The 202-residue stretch at 130–331 (QKFQESCWRF…ILKMLNRCIF (202 aa)) folds into the TLC domain. 5 consecutive transmembrane segments (helical) span residues 139–159 (FTFY…KPWA), 174–194 (LLPS…SLVF), 205–225 (FLAH…SWCA), 263–283 (LFFI…PFWI), and 302–322 (IFLN…GYFI). The Cytoplasmic segment spans residues 323–383 (LKMLNRCIFT…HLIANGQHGR (61 aa)). Position 340 is a phosphoserine (S340). Positions 340–383 (SDNEEEEEEEEEEEAESTKGKETEYLKNGLGTNRHLIANGQHGR) are disordered. A compositionally biased stretch (acidic residues) spans 342–354 (NEEEEEEEEEEEA). Over residues 355 to 364 (ESTKGKETEY) the composition is skewed to basic and acidic residues.

Predominantly expressed in testis. In skin, present in the upper stratum spinosum and stratum granulosum (at protein level).

The protein localises to the endoplasmic reticulum membrane. It carries out the reaction a very long-chain fatty acyl-CoA + a sphingoid base = an N-(very-long-chain fatty acyl)-sphingoid base + CoA + H(+). It catalyses the reaction docosanoyl-CoA + sphinganine = N-docosanoylsphinganine + CoA + H(+). The catalysed reaction is tetracosanoyl-CoA + sphinganine = N-tetracosanoylsphinganine + CoA + H(+). The enzyme catalyses hexacosanoyl-CoA + sphinganine = N-hexacosanoylsphinganine + CoA + H(+). It carries out the reaction 2-hydroxydocosanoyl-CoA + sphinganine = N-(2-hydroxydocosanoyl)-sphinganine + CoA + H(+). It catalyses the reaction 2-hydroxytetracosanoyl-CoA + sphinganine = N-(2-hydroxytetracosanoyl)-sphinganine + CoA + H(+). The catalysed reaction is an ultra-long-chain fatty acyl-CoA + a sphingoid base = an N-(ultra-long-chain-acyl)-sphingoid base + CoA + H(+). The enzyme catalyses octacosanoyl-CoA + sphinganine = N-(octacosanoyl)-sphinganine + CoA + H(+). It carries out the reaction a fatty acyl-CoA + sphing-4-enine = an N-acylsphing-4-enine + CoA + H(+). It catalyses the reaction sphinganine + octadecanoyl-CoA = N-(octadecanoyl)-sphinganine + CoA + H(+). The catalysed reaction is 2-hydroxyoctadecanoyl-CoA + sphinganine = N-(2-hydroxyoctadecanoyl)-sphinganine + CoA + H(+). It participates in lipid metabolism; sphingolipid metabolism. Functionally, ceramide synthase that catalyzes the transfer of the acyl chain from acyl-CoA to a sphingoid base, with high selectivity toward very- and ultra-long-chain fatty acyl-CoA (chain length greater than C22). N-acylates sphinganine and sphingosine bases to form dihydroceramides and ceramides in de novo synthesis and salvage pathways, respectively. It is crucial for the synthesis of ultra-long-chain ceramides in the epidermis, to maintain epidermal lipid homeostasis and terminal differentiation. This Mus musculus (Mouse) protein is Ceramide synthase 3.